The primary structure comprises 242 residues: DNA repair protein RecO (242 aa).

The protein belongs to the RecO family. As to quaternary structure, monomer.

In terms of biological role, involved in DNA repair and RecF pathway recombination. The polypeptide is DNA repair protein RecO (Salmonella gallinarum (strain 287/91 / NCTC 13346)).